The following is a 398-amino-acid chain: Na(+)/H(+) antiporter NhaA (398 aa).

Helical transmembrane passes span 8–28, 59–79, 96–116, 124–144, 154–174, 177–197, 202–222, 223–243, 261–281, 292–312, 328–348, and 362–382; these read FLQL…LALI, LLLW…GMEI, LPVI…SFII, AGWA…LSLL, VFLL…IALF, AELH…LLML, VMLL…VLKS, GVHA…IRGA, YFIL…GLSW, IIVG…WLAV, LFGL…IGGL, and LGIL…LRNA.

The protein belongs to the NhaA Na(+)/H(+) (TC 2.A.33) antiporter family.

Its subcellular location is the cell inner membrane. It catalyses the reaction Na(+)(in) + 2 H(+)(out) = Na(+)(out) + 2 H(+)(in). Its function is as follows. Na(+)/H(+) antiporter that extrudes sodium in exchange for external protons. This Tolumonas auensis (strain DSM 9187 / NBRC 110442 / TA 4) protein is Na(+)/H(+) antiporter NhaA.